The primary structure comprises 339 residues: Homocysteine S-methyltransferase 2 (339 aa).

The Hcy-binding domain occupies 12–326 (AVRRWVDAAG…NTIRAIHRTL (315 aa)). Positions 244, 311, and 312 each coordinate Zn(2+).

Monomer. Zn(2+) is required as a cofactor.

The enzyme catalyses S-methyl-L-methionine + L-homocysteine = 2 L-methionine + H(+). In terms of biological role, catalyzes methyl transfer from S-methylmethionine (SMM) to adenosyl-L-homocysteine (AdoMet). SMM degradation (by HMT-1, HMT-2, HMT-3 and HMT-4) and biosynthesis (by MMT1) constitute the SMM cycle in plants, which is probably required to achieve short term control of AdoMet level. This is Homocysteine S-methyltransferase 2 (HMT-2) from Zea mays (Maize).